We begin with the raw amino-acid sequence, 134 residues long: Large ribosomal subunit protein eL32 (134 aa).

The protein belongs to the eukaryotic ribosomal protein eL32 family.

The protein is Large ribosomal subunit protein eL32 (rpl32e) of Picrophilus torridus (strain ATCC 700027 / DSM 9790 / JCM 10055 / NBRC 100828 / KAW 2/3).